The sequence spans 265 residues: Palmitoyltransferase ZDHHC21 (265 aa).

Residues 1-16 are Cytoplasmic-facing; sequence MGLRIHFVVDPHGWCC. Residues 17–37 traverse the membrane as a helical segment; sequence MGLIVFVWLYNFFLIPKIVLF. Over 38-44 the chain is Extracellular; that stretch reads PHYEEGH. A helical membrane pass occupies residues 45–65; it reads IPGILIIIFYGIAMFCLVALV. Over 66-133 the chain is Cytoplasmic; sequence RASITDPGRL…NNCVGEDNHW (68 aa). The DHHC domain maps to 90-140; that stretch reads ELCNKCNLMRPKRSHHCSRCGHCVRRMDHHCPWINNCVGEDNHWLFLQLCF. Cys120 (S-palmitoyl cysteine intermediate) is an active-site residue. A helical membrane pass occupies residues 134 to 154; that stretch reads LFLQLCFYTELLTCYALMFSF. Topologically, residues 155–185 are extracellular; that stretch reads CHYYYFLPLKKRNLDLFVVRHELAIMRLAAF. A helical transmembrane segment spans residues 186 to 206; it reads MGITMLVGITGLFYTQLIGII. At 207 to 265 the chain is on the cytoplasmic side; the sequence is TDTTSIEKMSNCCEEISRPRKPWQQTFSEVFGTRWKILWFIPFRRRQPLRVPYHFANHV.

It belongs to the DHHC palmitoyltransferase family.

Its subcellular location is the golgi apparatus membrane. The protein localises to the golgi apparatus. It is found in the cis-Golgi network membrane. It localises to the cell membrane. The catalysed reaction is L-cysteinyl-[protein] + hexadecanoyl-CoA = S-hexadecanoyl-L-cysteinyl-[protein] + CoA. Functionally, palmitoyltransferase that catalyzes the addition of palmitate onto various protein substrates. Palmitoylates sex steroid hormone receptors, including ESR1, PGR and AR, thereby regulating their targeting to the plasma membrane. This affects rapid intracellular signaling by sex hormones via ERK and AKT kinases and the generation of cAMP, but does not affect that mediated by their nuclear receptor. Palmitoylates FYN, regulates its localization in hair follicles and plays a key role in epidermal homeostasis and hair follicle differentiation. Through the palmitoylation of PLCB1 and the regulation of PLCB1 downstream signaling may indirectly regulate the function of the endothelial barrier and the adhesion of leukocytes to the endothelium. Also has a palmitoyltransferase activity toward ADRA1D, positively regulating its activity and expression and may thereby play a role in vascular contraction. May also palmitoylate eNOS and LCK. This Bos taurus (Bovine) protein is Palmitoyltransferase ZDHHC21.